The following is a 221-amino-acid chain: Probable nicotinate-nucleotide adenylyltransferase (221 aa).

It belongs to the NadD family.

The catalysed reaction is nicotinate beta-D-ribonucleotide + ATP + H(+) = deamido-NAD(+) + diphosphate. It participates in cofactor biosynthesis; NAD(+) biosynthesis; deamido-NAD(+) from nicotinate D-ribonucleotide: step 1/1. Functionally, catalyzes the reversible adenylation of nicotinate mononucleotide (NaMN) to nicotinic acid adenine dinucleotide (NaAD). This Marinomonas sp. (strain MWYL1) protein is Probable nicotinate-nucleotide adenylyltransferase.